Reading from the N-terminus, the 132-residue chain is Small ribosomal subunit protein uS8 (132 aa).

Belongs to the universal ribosomal protein uS8 family. As to quaternary structure, part of the 30S ribosomal subunit. Contacts proteins S5 and S12.

In terms of biological role, one of the primary rRNA binding proteins, it binds directly to 16S rRNA central domain where it helps coordinate assembly of the platform of the 30S subunit. This chain is Small ribosomal subunit protein uS8, found in Streptomyces avermitilis (strain ATCC 31267 / DSM 46492 / JCM 5070 / NBRC 14893 / NCIMB 12804 / NRRL 8165 / MA-4680).